Consider the following 291-residue polypeptide: 4-hydroxy-tetrahydrodipicolinate synthase (291 aa).

Position 45 (Thr45) interacts with pyruvate. Tyr133 functions as the Proton donor/acceptor in the catalytic mechanism. Lys161 functions as the Schiff-base intermediate with substrate in the catalytic mechanism. Residue Ile203 participates in pyruvate binding.

The protein belongs to the DapA family. Homotetramer; dimer of dimers.

Its subcellular location is the cytoplasm. The catalysed reaction is L-aspartate 4-semialdehyde + pyruvate = (2S,4S)-4-hydroxy-2,3,4,5-tetrahydrodipicolinate + H2O + H(+). The protein operates within amino-acid biosynthesis; L-lysine biosynthesis via DAP pathway; (S)-tetrahydrodipicolinate from L-aspartate: step 3/4. Its function is as follows. Catalyzes the condensation of (S)-aspartate-beta-semialdehyde [(S)-ASA] and pyruvate to 4-hydroxy-tetrahydrodipicolinate (HTPA). In Neisseria gonorrhoeae (strain ATCC 700825 / FA 1090), this protein is 4-hydroxy-tetrahydrodipicolinate synthase.